A 466-amino-acid polypeptide reads, in one-letter code: MWGCWLGLLLLLLAGQAALEARRSRWRRELAPGLHLRGIRDAGGRYCQEQDMCCRGRADECALPYLGATCYCDLFCNRTVSDCCPDFWDFCLGIPPPFPPVQGCMHGGRIYPVFGTYWDNCNRCTCHEGGHWECDQEPCLVDPDMIKAINRGNYGWQAGNHSAFWGMTLDEGIRYRLGTIRPSSTVMNMNEIYTVLGQGEVLPTAFEASEKWPNLIHEPLDQGNCAGSWAFSTAAVASDRVSIHSLGHMTPILSPQNLLSCDTHHQQGCRGGRLDGAWWFLRRRGVVSDNCYPFSGREQNEASPTPRCMMHSRAMGRGKRQATSRCPNGQVDSNDIYQVTPAYRLGSDEKEIMKELMENGPVQALMEVHEDFFLYQRGIYSHTPVSQGRPEQYRRHGTHSVKITGWGEETLPDGRTIKYWTAANSWGPWWGERGHFRIVRGTNECDIETFVLGVWGRVGMEDMGHH.

Residues 1–21 (MWGCWLGLLLLLLAGQAALEA) form the signal peptide. The 48-residue stretch at 49–96 (EQDMCCRGRADECALPYLGATCYCDLFCNRTVSDCCPDFWDFCLGIPP) folds into the SMB domain. 5 disulfide bridges follow: cysteine 53/cysteine 72, cysteine 70/cysteine 72, cysteine 70/cysteine 84, cysteine 76/cysteine 83, and cysteine 84/cysteine 91. The N-linked (GlcNAc...) asparagine glycan is linked to asparagine 77. N-linked (GlcNAc...) asparagine glycosylation is present at asparagine 160.

This sequence belongs to the peptidase C1 family. Post-translationally, glycosylated. Highly expressed in kidney, heart and adrenocortical cells of adrenal glands. Moderately expressed in spleen and liver. Also found in prostate, seminal vesicle, epididymis and testis in male reproductive organs. In adrenal glands is found in the outer cortical regions corresponding to the zona glomerulosa (zG) and the undifferentiated cell zone (zU) (at protein level).

The protein localises to the secreted. May be implicated in the adrenocortical zonation and in mechanisms for repressing the CYP11B1 gene expression in adrenocortical cells. This is a non catalytic peptidase C1 family protein. The polypeptide is Tubulointerstitial nephritis antigen-like (Tinagl1) (Mus musculus (Mouse)).